Here is a 156-residue protein sequence, read N- to C-terminus: Small ribosomal subunit protein uS7 (156 aa).

This sequence belongs to the universal ribosomal protein uS7 family. In terms of assembly, part of the 30S ribosomal subunit. Contacts proteins S9 and S11.

Its function is as follows. One of the primary rRNA binding proteins, it binds directly to 16S rRNA where it nucleates assembly of the head domain of the 30S subunit. Is located at the subunit interface close to the decoding center, probably blocks exit of the E-site tRNA. The chain is Small ribosomal subunit protein uS7 from Nitrobacter winogradskyi (strain ATCC 25391 / DSM 10237 / CIP 104748 / NCIMB 11846 / Nb-255).